Consider the following 268-residue polypeptide: Ribosomal RNA small subunit methyltransferase A (268 aa).

Residues Asn-18, Leu-20, Gly-45, Glu-66, Asp-91, and Asn-112 each coordinate S-adenosyl-L-methionine.

The protein belongs to the class I-like SAM-binding methyltransferase superfamily. rRNA adenine N(6)-methyltransferase family. RsmA subfamily.

The protein localises to the cytoplasm. It carries out the reaction adenosine(1518)/adenosine(1519) in 16S rRNA + 4 S-adenosyl-L-methionine = N(6)-dimethyladenosine(1518)/N(6)-dimethyladenosine(1519) in 16S rRNA + 4 S-adenosyl-L-homocysteine + 4 H(+). Functionally, specifically dimethylates two adjacent adenosines (A1518 and A1519) in the loop of a conserved hairpin near the 3'-end of 16S rRNA in the 30S particle. May play a critical role in biogenesis of 30S subunits. This is Ribosomal RNA small subunit methyltransferase A from Shewanella baltica (strain OS223).